A 205-amino-acid chain; its full sequence is Probable GTP-binding protein EngB (205 aa).

An EngB-type G domain is found at 29–203 (QGAEIAFIGR…KAVLSQWFRS (175 aa)). GTP is bound by residues 37-44 (GRSNAGKS), 64-68 (GRTQM), 82-85 (DLPG), 149-152 (TKSD), and 182-184 (FSS). Residues S44 and T66 each coordinate Mg(2+).

Belongs to the TRAFAC class TrmE-Era-EngA-EngB-Septin-like GTPase superfamily. EngB GTPase family. Mg(2+) is required as a cofactor.

In terms of biological role, necessary for normal cell division and for the maintenance of normal septation. In Coxiella burnetii (strain CbuG_Q212) (Coxiella burnetii (strain Q212)), this protein is Probable GTP-binding protein EngB.